The sequence spans 448 residues: Antilisterial bacteriocin subtilosin biosynthesis protein AlbA (448 aa).

The 215-residue stretch at 115 to 329 folds into the Radical SAM core domain; sequence FPMPLHATFE…EQHVIDEFKD (215 aa). C129, C133, C136, C408, C414, and C417 together coordinate [4Fe-4S] cluster.

[4Fe-4S] cluster serves as cofactor.

It localises to the cytoplasm. Its function is as follows. Catalyzes the formation of 3 thioether bonds during production of the sactipeptide subtilosin from SboA. In vitro the thioether bonds cannot be made in the absence of the SboA propeptide, suggesting this is the first reaction in subtilosin maturation. In vitro, in the absence of a second substrate, cleaves S-adenosyl-L-methionine into Met and 5'-dA. In Bacillus subtilis (strain 168), this protein is Antilisterial bacteriocin subtilosin biosynthesis protein AlbA (albA).